The primary structure comprises 78 residues: Putative membrane protein insertion efficiency factor (78 aa).

Belongs to the UPF0161 family.

It is found in the cell membrane. Could be involved in insertion of integral membrane proteins into the membrane. The protein is Putative membrane protein insertion efficiency factor of Bacillus thuringiensis subsp. konkukian (strain 97-27).